The following is a 452-amino-acid chain: tRNA modification GTPase MnmE (452 aa).

Residues Arg21, Glu78, and Lys118 each coordinate (6S)-5-formyl-5,6,7,8-tetrahydrofolate. In terms of domain architecture, TrmE-type G spans 214-375; that stretch reads GMKVVIAGRP…LREHLKQAMG (162 aa). Asn224 lines the K(+) pocket. GTP-binding positions include 224 to 229, 243 to 249, and 268 to 271; these read NAGKSS, TDIAGTT, and DTAG. Residue Ser228 coordinates Mg(2+). Residues Thr243, Ile245, and Thr248 each coordinate K(+). Position 249 (Thr249) interacts with Mg(2+). Lys452 is a (6S)-5-formyl-5,6,7,8-tetrahydrofolate binding site.

Belongs to the TRAFAC class TrmE-Era-EngA-EngB-Septin-like GTPase superfamily. TrmE GTPase family. Homodimer. Heterotetramer of two MnmE and two MnmG subunits. K(+) is required as a cofactor.

The protein resides in the cytoplasm. Exhibits a very high intrinsic GTPase hydrolysis rate. Involved in the addition of a carboxymethylaminomethyl (cmnm) group at the wobble position (U34) of certain tRNAs, forming tRNA-cmnm(5)s(2)U34. In Haemophilus influenzae (strain ATCC 51907 / DSM 11121 / KW20 / Rd), this protein is tRNA modification GTPase MnmE.